We begin with the raw amino-acid sequence, 121 residues long: Large ribosomal subunit protein bL19 (121 aa).

This sequence belongs to the bacterial ribosomal protein bL19 family.

Functionally, this protein is located at the 30S-50S ribosomal subunit interface and may play a role in the structure and function of the aminoacyl-tRNA binding site. This chain is Large ribosomal subunit protein bL19 (rplS), found in Chlamydia pneumoniae (Chlamydophila pneumoniae).